Reading from the N-terminus, the 1502-residue chain is Nucleoporin NUP170 (1502 aa).

The disordered stretch occupies residues 1–31 (MFQSFFHNNGPAAAGETFSDSRSYPLTNHQE). The segment covering 18–30 (FSDSRSYPLTNHQ) has biased composition (polar residues). Residues 233–261 (LISTTMELFMFAISLDKATNELSVFNTHL) are leucine-zipper. A Phosphoserine modification is found at serine 1247.

Belongs to the non-repetitive/WGA-negative nucleoporin family. As to quaternary structure, component of the nuclear pore complex (NPC). NPC constitutes the exclusive means of nucleocytoplasmic transport. NPCs allow the passive diffusion of ions and small molecules and the active, nuclear transport receptor-mediated bidirectional transport of macromolecules such as proteins, RNAs, ribonucleoparticles (RNPs), and ribosomal subunits across the nuclear envelope. Due to its 8-fold rotational symmetry, all subunits are present with 8 copies or multiples thereof. During mitosis NUP53 changes its binding partner within the NPC from NUP170 to NIC96, exposing a high affinity binding site for the karyopherin PSE1, and retaining it in the NPC.

The protein resides in the nucleus. Its subcellular location is the nuclear pore complex. It is found in the nucleus membrane. Functions as a component of the nuclear pore complex (NPC). NPC components, collectively referred to as nucleoporins (NUPs), can play the role of both NPC structural components and of docking or interaction partners for transiently associated nuclear transport factors. NUP170 probably plays an important role in NPC assembly and organization. In addition it is required for chromosome transmission fidelity. This Saccharomyces cerevisiae (strain ATCC 204508 / S288c) (Baker's yeast) protein is Nucleoporin NUP170 (NUP170).